The primary structure comprises 208 residues: ER membrane protein complex subunit 8/9 homolog (208 aa).

The region spanning 11–146 (YEISQNAYIK…ERSPVMQLCV (136 aa)) is the MPN domain.

The protein belongs to the EMC8/EMC9 family.

The chain is ER membrane protein complex subunit 8/9 homolog (EMB2731) from Arabidopsis thaliana (Mouse-ear cress).